The following is a 117-amino-acid chain: Cysteine rich necrotrophic effector Tox1 (117 aa).

The signal sequence occupies residues 1-17 (MKLTMVLSVAFATLTFA). 8 disulfides stabilise this stretch: Cys36–Cys87, Cys44–Cys55, Cys53–Cys58, Cys54–Cys98, Cys63–Cys83, Cys67–Cys117, Cys86–Cys97, and Cys107–Cys110. The tract at residues 87 to 117 (CNAGGESHELCCSIASAGIDCNPCTAGLRMC) is chitin-binding domain.

Interacts with host cell wall-associated kinase receptor Snn1.

It localises to the secreted. In terms of biological role, necrotrophic effector that plays a critical role during fungal penetration, via its interaction with the host Snn1 protein. Snn1 is a member of the wall-associated kinase class of receptors, which are known to drive pathways for biotrophic pathogen resistance. Recognition of Tox1 by Snn1 induces mitogen-activated protein kinase genes such as MAPK3 and activates programmed cell death, which allows this necrotroph to gain nutrients and sporulate. Recognition of Tox1 by Snn1 also induces other plant defense responses, including oxidative burst and pathogenesis related (PR) gene expression. The development of necrosis and disease induced by Tox1, and particularly penetration during infection, requires light, which is probably related to the light-dependent expression of host Snn1. Tox1 plays an additional role in providing significant protection from wheat chitinases by binding chitin in the fungal cell wall. The protein is Cysteine rich necrotrophic effector Tox1 of Phaeosphaeria nodorum (strain SN15 / ATCC MYA-4574 / FGSC 10173) (Glume blotch fungus).